Reading from the N-terminus, the 152-residue chain is Natriuretic peptides A (152 aa).

Positions 1 to 24 (MGSSAITVSFLLFLAFQLPGQTGA) are cleaved as a signal peptide. 2 consecutive propeptides follow at residues 25 to 122 (NPVY…TAPR) and 92 to 102 (EGGVLGRGPWE). A disordered region spans residues 58–101 (PSQVLSEQNEEAGAPLSPLSEMPPWMGEVNPAQREGGVLGRGPW). Residue S128 is modified to Phosphoserine. C129 and C145 are disulfide-bonded. The tract at residues 146 to 150 (NSFRY) is important for degradation of atrial natriuretic peptide by IDE.

This sequence belongs to the natriuretic peptide family. Homodimer; disulfide-linked antiparallel dimer. In terms of processing, the precursor molecule is proteolytically cleaved by CORIN at Arg-122 to produce the atrial natriuretic peptide. Undergoes further proteolytic cleavage by unknown proteases to give rise to long-acting natriuretic peptide, vessel dilator and kaliuretic peptide. Additional processing gives rise to the auriculin and atriopeptin peptides. In the kidneys, alternative processing by an unknown protease results in the peptide urodilatin. Post-translationally, cleavage by MME initiates degradation of the factor and thereby regulates its activity. Degradation by IDE results in reduced activation of NPR1 (in vitro). During IDE degradation, the resulting products can temporarily stimulate NPR2 to produce cGMP, before the fragments are completely degraded and inactivated by IDE (in vitro). Degraded by IDE. In terms of processing, phosphorylation on Ser-128 decreases vasorelaxant activity.

The protein resides in the secreted. Its subcellular location is the perikaryon. It localises to the cell projection. Hormone that plays a key role in mediating cardio-renal homeostasis, and is involved in vascular remodeling and regulating energy metabolism. Acts by specifically binding and stimulating NPR1 to produce cGMP, which in turn activates effector proteins, such as PRKG1, that drive various biological responses. Regulates vasodilation, natriuresis, diuresis and aldosterone synthesis and is therefore essential for regulating blood pressure, controlling the extracellular fluid volume and maintaining the fluid-electrolyte balance. Also involved in inhibiting cardiac remodeling and cardiac hypertrophy by inducing cardiomyocyte apoptosis and attenuating the growth of cardiomyocytes and fibroblasts. Plays a role in female pregnancy by promoting trophoblast invasion and spiral artery remodeling in uterus, and thus prevents pregnancy-induced hypertension. In adipose tissue, acts in various cGMP- and PKG-dependent pathways to regulate lipid metabolism and energy homeostasis. This includes up-regulating lipid metabolism and mitochondrial oxygen utilization by activating the AMP-activated protein kinase (AMPK), and increasing energy expenditure by acting via MAPK11 to promote the UCP1-dependent thermogenesis of brown adipose tissue. Binds the clearance receptor NPR3 which removes the hormone from circulation. Its function is as follows. May have a role in cardio-renal homeostasis through regulation of natriuresis, diuresis, vasodilation, and inhibiting aldosterone synthesis. In vitro, promotes the production of cGMP and induces vasodilation. May promote natriuresis, at least in part, by enhancing prostaglandin E2 synthesis resulting in the inhibition of renal Na+-K+-ATPase. However reports on the involvement of this peptide in mammal blood volume and blood pressure homeostasis are conflicting; according to a report, in vivo it is not sufficient to activate cGMP and does not inhibit collecting duct transport nor effect diuresis and natriuresis. Appears to bind to specific receptors that are distinct from the receptors bound by atrial natriuretic peptide and vessel dilator. Possibly enhances protein excretion in urine by decreasing proximal tubular protein reabsorption. Functionally, may have a role in cardio-renal homeostasis through regulation of natriuresis, diuresis, and vasodilation. In vitro, promotes the production of cGMP and induces vasodilation. May promote natriuresis, at least in part, by enhancing prostaglandin E2 synthesis resulting in the inhibition of renal Na+-K+-ATPase. However reports on the involvement of this peptide in mammal blood volume and blood pressure homeostasis are conflicting; according to a report it is not sufficient to activate cGMP and does not inhibit collecting duct transport nor effect diuresis and natriuresis. Appears to bind to specific receptors that are distinct from the receptors bound by the atrial natriuretic and long-acting natriuretic peptides. Possibly functions in protein excretion in urine by maintaining the integrity of the proximal tubules and enhancing protein excretion by decreasing proximal tubular protein reabsorption. In terms of biological role, may have a role in cardio-renal homeostasis through regulation of diuresis and inhibiting aldosterone synthesis. In vitro, promotes the production of cGMP and induces vasodilation. May promote natriuresis, at least in part, by enhancing prostaglandin E2 synthesis resulting in the inhibition of renal Na+-K+-ATPase. May have a role in potassium excretion but not sodium excretion (natriuresis). Possibly enhances protein excretion in urine by decreasing proximal tubular protein reabsorption. Hormone produced in the kidneys that appears to be important for maintaining cardio-renal homeostasis. Mediates vasodilation, natriuresis and diuresis primarily in the renal system, in order to maintain the extracellular fluid volume and control the fluid-electrolyte balance. Specifically binds and stimulates cGMP production by renal transmembrane receptors, likely NPR1. Urodilatin not ANP, may be the natriuretic peptide responsible for the regulation of sodium and water homeostasis in the kidney. Its function is as follows. May have a role in cardio-renal homeostasis through regulation of natriuresis and vasodilation. In vivo promotes natriuresis and in vitro, vasodilates renal artery strips. Functionally, may have a role in cardio-renal homeostasis through regulation of regulation of natriuresis and vasodilation. In vivo promotes natriuresis. In vitro, vasodilates intestinal smooth muscle but not smooth muscle strips. In terms of biological role, may have a role in cardio-renal homeostasis through regulation of natriuresis and vasodilation. In vivo promotes natriuresis. In vitro, selectively vasodilates intestinal and vascular smooth muscle strips. May have a role in cardio-renal homeostasis through regulation of natriuresis and vasodilation. In vivo promotes natriuresis. In vitro, selectively vasodilates intestinal smooth muscle but not vascular smooth muscle strips. In Bos taurus (Bovine), this protein is Natriuretic peptides A (NPPA).